Consider the following 344-residue polypeptide: S-adenosylmethionine:tRNA ribosyltransferase-isomerase (344 aa).

It belongs to the QueA family. Monomer.

It is found in the cytoplasm. The catalysed reaction is 7-aminomethyl-7-carbaguanosine(34) in tRNA + S-adenosyl-L-methionine = epoxyqueuosine(34) in tRNA + adenine + L-methionine + 2 H(+). It participates in tRNA modification; tRNA-queuosine biosynthesis. Transfers and isomerizes the ribose moiety from AdoMet to the 7-aminomethyl group of 7-deazaguanine (preQ1-tRNA) to give epoxyqueuosine (oQ-tRNA). In Pediococcus pentosaceus (strain ATCC 25745 / CCUG 21536 / LMG 10740 / 183-1w), this protein is S-adenosylmethionine:tRNA ribosyltransferase-isomerase.